The sequence spans 162 residues: Disulfide bond formation protein B (162 aa).

At 1 to 8 (MTPLFRKA) the chain is on the cytoplasmic side. The chain crosses the membrane as a helical span at residues 9-25 (VWLLFAVSVCAFAGSLA). The Periplasmic portion of the chain corresponds to 26 to 43 (AQYVLGMEPCVLCISQRL). Residues Cys-35 and Cys-38 are joined by a disulfide bond. A helical membrane pass occupies residues 44–60 (CVLATALCAAIVLMCRP). Residues 61–67 (RRKAGGL) lie on the Cytoplasmic side of the membrane. A helical membrane pass occupies residues 68 to 85 (FGAVFISIPAVTGISVAA). Topologically, residues 86 to 141 (YQLWLQSLPPGTAPSCGAPWTFRLKGWPLFDWFEPVVRGFGNCAEPDYLLGVALPV) are periplasmic. Cys-101 and Cys-128 form a disulfide bridge. Residues 142-160 (WSVAYFLAVALTVWWAWAR) form a helical membrane-spanning segment. The Cytoplasmic segment spans residues 161–162 (AK).

The protein belongs to the DsbB family.

Its subcellular location is the cell inner membrane. Its function is as follows. Required for disulfide bond formation in some periplasmic proteins. Acts by oxidizing the DsbA protein. The polypeptide is Disulfide bond formation protein B (Neisseria meningitidis serogroup A / serotype 4A (strain DSM 15465 / Z2491)).